Here is a 615-residue protein sequence, read N- to C-terminus: Protein ENHANCED DISEASE RESISTANCE 4 (615 aa).

3 disordered regions span residues 46–271, 292–336, and 549–592; these read IAPS…DDDE, YKEQ…GRQG, and THDI…RGSP. Composition is skewed to polar residues over residues 63–89 and 119–129; these read NEPQ…SSPG and GDGTNEIQEQE. The stretch at 104–129 forms a coiled coil; sequence MESTEKELDDLELSNGDGTNEIQEQE. Residues 134–148 show a composition bias toward basic and acidic residues; sequence DSEKNEREDNSRLES. Residues 159 to 168 show a composition bias toward low complexity; that stretch reads GSGSSSGSLS. 2 stretches are compositionally biased toward polar residues: residues 296–314 and 552–564; these read GASS…ITTY and INAN…TSES. Over residues 565-577 the composition is skewed to basic and acidic residues; sequence PIDKAPSKPEKLR.

Interacts with RLK902. Binds and recruits EDR1 at the powdery mildew (e.g. G.cichoracearum) penetration site on the plasma membrane. Interacts with CHC2. Expressed in stems and rosette leaves, and weakly in inflorescences. Not detected in roots.

It is found in the cell membrane. The protein localises to the endosome. In terms of biological role, plays a negative role in salicylic acid (SA)-mediated resistance to powdery mildew (e.g. Golovinomyces cichoracearum). May modulate plant immunity by regulating the relocation of EDR1 by interacting with CHC2 and modulating endocytosis. This Arabidopsis thaliana (Mouse-ear cress) protein is Protein ENHANCED DISEASE RESISTANCE 4.